The sequence spans 404 residues: uncharacterized protein (404 aa).

The next 8 helical transmembrane spans lie at 1 to 21 (MNVLWGLLGAVAIIAIAFLFS), 32 to 52 (VIVGLCTQVAFGYIVLKWEAG), 89 to 109 (AFALSVLPVIIFFSALIAVLY), 182 to 202 (LFGYALLGIPIEYLLAASFMA), 261 to 281 (LAFVALIAVVNGILGGAFGLF), 285 to 305 (GVTLESILGYVFSPIAFLIGV), 344 to 364 (ATIISFALCGFANFSSIAIML), and 384 to 404 (KAVLAGTLANLLSAAIAGMFI).

This sequence belongs to the concentrative nucleoside transporter (CNT) (TC 2.A.41) family.

It is found in the cell membrane. This is an uncharacterized protein from Bacillus subtilis (strain 168).